The primary structure comprises 165 residues: UPF0179 protein Igni_1272 (165 aa).

This sequence belongs to the UPF0179 family.

The chain is UPF0179 protein Igni_1272 from Ignicoccus hospitalis (strain KIN4/I / DSM 18386 / JCM 14125).